Consider the following 314-residue polypeptide: Protein ATP1B4 (314 aa).

Polar residues predominate over residues 1–17 (MATTAGEQANYLQSADS). Residues 1 to 37 (MATTAGEQANYLQSADSMSDGRQHHPEEAGEKKQEEQ) form a disordered region. Residues 1–69 (MATTAGEQAN…VLGRDKKSWA (69 aa)) lie on the Cytoplasmic side of the membrane. The segment covering 19–37 (SDGRQHHPEEAGEKKQEEQ) has biased composition (basic and acidic residues). A helical transmembrane segment spans residues 70–90 (LILLFYFILYCFLAGLFALCI). Topologically, residues 91–314 (YGLLATISPY…GRVAFTLHIG (224 aa)) are extracellular. Cysteine 160 and cysteine 179 are oxidised to a cystine. Asparagine 188 carries an N-linked (GlcNAc...) asparagine glycan. Cystine bridges form between cysteine 189–cysteine 205 and cysteine 228–cysteine 287. Asparagine 264 is a glycosylation site (N-linked (GlcNAc...) asparagine).

This sequence belongs to the X(+)/potassium ATPases subunit beta family. As to quaternary structure, composed of two subunits: alpha (catalytic) and beta (accessory). Glycosylated. As to expression, expressed in skeletal muscle, liver, lung, kidney, heart, brain and skin.

The protein resides in the membrane. This is the non-catalytic component of the active enzyme, which catalyzes the hydrolysis of ATP coupled with the exchange of Na(+) and K(+) ions across the plasma membrane. In Xenopus laevis (African clawed frog), this protein is Protein ATP1B4 (atp1b4).